A 631-amino-acid chain; its full sequence is 1-deoxy-D-xylulose-5-phosphate synthase (631 aa).

Thiamine diphosphate contacts are provided by residues His-73 and 114–116 (SHA). Asp-145 contacts Mg(2+). Residues 146–147 (GA), Asn-175, Tyr-286, and Glu-368 contribute to the thiamine diphosphate site. Residue Asn-175 coordinates Mg(2+).

The protein belongs to the transketolase family. DXPS subfamily. As to quaternary structure, homodimer. Mg(2+) is required as a cofactor. Thiamine diphosphate serves as cofactor.

It carries out the reaction D-glyceraldehyde 3-phosphate + pyruvate + H(+) = 1-deoxy-D-xylulose 5-phosphate + CO2. It functions in the pathway metabolic intermediate biosynthesis; 1-deoxy-D-xylulose 5-phosphate biosynthesis; 1-deoxy-D-xylulose 5-phosphate from D-glyceraldehyde 3-phosphate and pyruvate: step 1/1. Its function is as follows. Catalyzes the acyloin condensation reaction between C atoms 2 and 3 of pyruvate and glyceraldehyde 3-phosphate to yield 1-deoxy-D-xylulose-5-phosphate (DXP). The sequence is that of 1-deoxy-D-xylulose-5-phosphate synthase from Nocardia farcinica (strain IFM 10152).